A 599-amino-acid chain; its full sequence is Aspartate--tRNA ligase (599 aa).

Glu-175 lines the L-aspartate pocket. Residues 199-202 (QQFK) are aspartate. L-aspartate-binding residues include Arg-221 and His-446. Residue 221–223 (RDE) coordinates ATP. Glu-480 contributes to the ATP binding site. Arg-487 lines the L-aspartate pocket. Residue 532 to 535 (GVDR) coordinates ATP.

This sequence belongs to the class-II aminoacyl-tRNA synthetase family. Type 1 subfamily. In terms of assembly, homodimer.

Its subcellular location is the cytoplasm. The catalysed reaction is tRNA(Asp) + L-aspartate + ATP = L-aspartyl-tRNA(Asp) + AMP + diphosphate. Catalyzes the attachment of L-aspartate to tRNA(Asp) in a two-step reaction: L-aspartate is first activated by ATP to form Asp-AMP and then transferred to the acceptor end of tRNA(Asp). This chain is Aspartate--tRNA ligase, found in Streptomyces griseus subsp. griseus (strain JCM 4626 / CBS 651.72 / NBRC 13350 / KCC S-0626 / ISP 5235).